A 132-amino-acid chain; its full sequence is Prefoldin subunit alpha (132 aa).

It belongs to the prefoldin subunit alpha family. In terms of assembly, heterohexamer of two alpha and four beta subunits.

Its subcellular location is the cytoplasm. Functionally, molecular chaperone capable of stabilizing a range of proteins. Seems to fulfill an ATP-independent, HSP70-like function in archaeal de novo protein folding. The polypeptide is Prefoldin subunit alpha (Pyrobaculum islandicum (strain DSM 4184 / JCM 9189 / GEO3)).